Consider the following 136-residue polypeptide: Large ribosomal subunit protein uL16 (136 aa).

It belongs to the universal ribosomal protein uL16 family. In terms of assembly, part of the 50S ribosomal subunit.

Functionally, binds 23S rRNA and is also seen to make contacts with the A and possibly P site tRNAs. The chain is Large ribosomal subunit protein uL16 from Serratia proteamaculans (strain 568).